The sequence spans 140 residues: ATP synthase epsilon chain (140 aa).

This sequence belongs to the ATPase epsilon chain family. F-type ATPases have 2 components, CF(1) - the catalytic core - and CF(0) - the membrane proton channel. CF(1) has five subunits: alpha(3), beta(3), gamma(1), delta(1), epsilon(1). CF(0) has three main subunits: a, b and c.

It localises to the cell inner membrane. Its function is as follows. Produces ATP from ADP in the presence of a proton gradient across the membrane. In Yersinia enterocolitica serotype O:8 / biotype 1B (strain NCTC 13174 / 8081), this protein is ATP synthase epsilon chain.